A 67-amino-acid polypeptide reads, in one-letter code: Large ribosomal subunit protein uL29 (67 aa).

Belongs to the universal ribosomal protein uL29 family.

The protein is Large ribosomal subunit protein uL29 of Ehrlichia canis (strain Jake).